The following is a 274-amino-acid chain: NAD(P)H-quinone oxidoreductase subunit K, chloroplastic (274 aa).

Polar residues-rich tracts occupy residues 1–10 (MVINQKNLSS) and 18–27 (SGSQSSTKAD). The segment at 1–27 (MVINQKNLSSPVAPYDKSGSQSSTKAD) is disordered. [4Fe-4S] cluster is bound by residues cysteine 90, cysteine 91, cysteine 155, and cysteine 186.

It belongs to the complex I 20 kDa subunit family. NDH is composed of at least 16 different subunits, 5 of which are encoded in the nucleus. [4Fe-4S] cluster is required as a cofactor.

The protein localises to the plastid. It localises to the chloroplast thylakoid membrane. The catalysed reaction is a plastoquinone + NADH + (n+1) H(+)(in) = a plastoquinol + NAD(+) + n H(+)(out). The enzyme catalyses a plastoquinone + NADPH + (n+1) H(+)(in) = a plastoquinol + NADP(+) + n H(+)(out). NDH shuttles electrons from NAD(P)H:plastoquinone, via FMN and iron-sulfur (Fe-S) centers, to quinones in the photosynthetic chain and possibly in a chloroplast respiratory chain. The immediate electron acceptor for the enzyme in this species is believed to be plastoquinone. Couples the redox reaction to proton translocation, and thus conserves the redox energy in a proton gradient. In Chlorokybus atmophyticus (Soil alga), this protein is NAD(P)H-quinone oxidoreductase subunit K, chloroplastic.